Consider the following 545-residue polypeptide: Bifunctional purine biosynthesis protein PurH (545 aa).

Positions 1 to 150 (MTNTNRPIRR…KNHATVAIVT (150 aa)) constitute an MGS-like domain.

The protein belongs to the PurH family.

The enzyme catalyses (6R)-10-formyltetrahydrofolate + 5-amino-1-(5-phospho-beta-D-ribosyl)imidazole-4-carboxamide = 5-formamido-1-(5-phospho-D-ribosyl)imidazole-4-carboxamide + (6S)-5,6,7,8-tetrahydrofolate. The catalysed reaction is IMP + H2O = 5-formamido-1-(5-phospho-D-ribosyl)imidazole-4-carboxamide. The protein operates within purine metabolism; IMP biosynthesis via de novo pathway; 5-formamido-1-(5-phospho-D-ribosyl)imidazole-4-carboxamide from 5-amino-1-(5-phospho-D-ribosyl)imidazole-4-carboxamide (10-formyl THF route): step 1/1. It functions in the pathway purine metabolism; IMP biosynthesis via de novo pathway; IMP from 5-formamido-1-(5-phospho-D-ribosyl)imidazole-4-carboxamide: step 1/1. This chain is Bifunctional purine biosynthesis protein PurH, found in Bifidobacterium longum (strain NCC 2705).